The sequence spans 441 residues: Cytochrome c biogenesis protein Ccs1 (441 aa).

Transmembrane regions (helical) follow at residues 19 to 39 (LKLA…GTVI), 78 to 98 (TWWF…CTLA), and 164 to 184 (IGPI…LLGN).

The protein belongs to the Ccs1/CcsB family. In terms of assembly, may interact with CcsA.

Its subcellular location is the plastid. It localises to the chloroplast thylakoid membrane. Required during biogenesis of c-type cytochromes (cytochrome c6 and cytochrome f) at the step of heme attachment. The chain is Cytochrome c biogenesis protein Ccs1 from Rhodomonas salina (Cryptomonas salina).